The primary structure comprises 289 residues: Acetyl-coenzyme A carboxylase carboxyl transferase subunit beta (289 aa).

Positions 34–289 constitute a CoA carboxyltransferase N-terminal domain; it reads MWVKCNKCGE…KLINMHQNSF (256 aa). The Zn(2+) site is built by C38, C41, C57, and C60. A C4-type zinc finger spans residues 38–60; it reads CNKCGEILYQNDLEKNYMVCNLC.

The protein belongs to the AccD/PCCB family. As to quaternary structure, acetyl-CoA carboxylase is a heterohexamer composed of biotin carboxyl carrier protein (AccB), biotin carboxylase (AccC) and two subunits each of ACCase subunit alpha (AccA) and ACCase subunit beta (AccD). It depends on Zn(2+) as a cofactor.

It is found in the cytoplasm. The catalysed reaction is N(6)-carboxybiotinyl-L-lysyl-[protein] + acetyl-CoA = N(6)-biotinyl-L-lysyl-[protein] + malonyl-CoA. The protein operates within lipid metabolism; malonyl-CoA biosynthesis; malonyl-CoA from acetyl-CoA: step 1/1. Its function is as follows. Component of the acetyl coenzyme A carboxylase (ACC) complex. Biotin carboxylase (BC) catalyzes the carboxylation of biotin on its carrier protein (BCCP) and then the CO(2) group is transferred by the transcarboxylase to acetyl-CoA to form malonyl-CoA. This chain is Acetyl-coenzyme A carboxylase carboxyl transferase subunit beta, found in Clostridium botulinum (strain ATCC 19397 / Type A).